The following is a 282-amino-acid chain: tRNA N(3)-cytidine methyltransferase METTL6 (282 aa).

Positions 45, 49, 87, 110, 136, 137, and 157 each coordinate S-adenosyl-L-methionine.

It belongs to the methyltransferase superfamily. METL family. In terms of assembly, monomer. Interacts with SARS1/SerRS; interaction is mediated via tRNA(Ser) and is required for N(3)-methylcytidine methylation.

The protein localises to the cytoplasm. It is found in the nucleus. It carries out the reaction cytidine(32) in tRNA(Ser) + S-adenosyl-L-methionine = N(3)-methylcytidine(32) in tRNA(Ser) + S-adenosyl-L-homocysteine + H(+). S-adenosyl-L-methionine-dependent methyltransferase that mediates N(3)-methylcytidine modification of residue 32 of the tRNA anticodon loop of tRNA(Ser), including tRNA(Ser)(UGA) and tRNA(Ser)(GCU). Interaction with SARS1/SerRS is required for N(3)-methylcytidine methylation. In Pongo abelii (Sumatran orangutan), this protein is tRNA N(3)-cytidine methyltransferase METTL6 (METTL6).